A 416-amino-acid polypeptide reads, in one-letter code: 3-isopropylmalate dehydratase large subunit (416 aa).

Residues cysteine 297, cysteine 357, and cysteine 360 each contribute to the [4Fe-4S] cluster site.

The protein belongs to the aconitase/IPM isomerase family. LeuC type 2 subfamily. As to quaternary structure, heterodimer of LeuC and LeuD. The cofactor is [4Fe-4S] cluster.

It catalyses the reaction (2R,3S)-3-isopropylmalate = (2S)-2-isopropylmalate. It participates in amino-acid biosynthesis; L-leucine biosynthesis; L-leucine from 3-methyl-2-oxobutanoate: step 2/4. Catalyzes the isomerization between 2-isopropylmalate and 3-isopropylmalate, via the formation of 2-isopropylmaleate. The polypeptide is 3-isopropylmalate dehydratase large subunit (Methanoregula boonei (strain DSM 21154 / JCM 14090 / 6A8)).